The sequence spans 653 residues: Beta-galactosidase-1-like protein 3 (653 aa).

The active-site Proton donor is the Glu-227. The active-site Nucleophile is Glu-301.

It belongs to the glycosyl hydrolase 35 family.

The protein is Beta-galactosidase-1-like protein 3 (GLB1L3) of Homo sapiens (Human).